A 115-amino-acid polypeptide reads, in one-letter code: MTPPTAGDDILSRIADTLATRRPEAGGDPQSSYVAKLLSKAPDAFLKKIGEEATELVMAAKDGQPDRIISETADLWFHCLVALTHYNLRPEDVLAELARREGLSGLEEKARRPRD.

It belongs to the PRA-PH family.

Its subcellular location is the cytoplasm. It carries out the reaction 1-(5-phospho-beta-D-ribosyl)-ATP + H2O = 1-(5-phospho-beta-D-ribosyl)-5'-AMP + diphosphate + H(+). It participates in amino-acid biosynthesis; L-histidine biosynthesis; L-histidine from 5-phospho-alpha-D-ribose 1-diphosphate: step 2/9. This is Phosphoribosyl-ATP pyrophosphatase from Bordetella bronchiseptica (strain ATCC BAA-588 / NCTC 13252 / RB50) (Alcaligenes bronchisepticus).